A 522-amino-acid polypeptide reads, in one-letter code: 4-chlorobenzoate--CoA ligase (522 aa).

ATP is bound by residues T161–K169, D300–T305, and N410.

This sequence belongs to the ATP-dependent AMP-binding enzyme family. As to quaternary structure, homodimer. Mg(2+) serves as cofactor.

It carries out the reaction 4-chlorobenzoate + ATP + CoA = 4-chlorobenzoyl-CoA + AMP + diphosphate. It functions in the pathway xenobiotic degradation; 4-chlorobenzoate degradation; 4-hydroxybenzoate from 4-chlorobenzoate: step 2/3. In terms of biological role, catalyzes the formation of chlorobenzoyl-CoA via a 2 step reaction. First 4-chlorobenzoate is adenylated by ATP, followed by acyl transfer from the 4-chlorobenzoyl-AMP intermediate to CoA. Benzoate, 4-bromobenzoate, 4-iodobenzoate and 4-fluorobenzoate also act as substrates. Inactive towards 4-nitrobenzoate. In Arthrobacter sp, this protein is 4-chlorobenzoate--CoA ligase.